A 469-amino-acid chain; its full sequence is Diaminobutyrate--2-oxoglutarate transaminase (469 aa).

Residue lysine 290 is modified to N6-(pyridoxal phosphate)lysine.

Belongs to the class-III pyridoxal-phosphate-dependent aminotransferase family. It depends on pyridoxal 5'-phosphate as a cofactor.

The protein resides in the cytoplasm. The enzyme catalyses L-2,4-diaminobutanoate + 2-oxoglutarate = L-aspartate 4-semialdehyde + L-glutamate. Its function is as follows. Involved in the degradation of ectoine, which allows H.elongata to utilize ectoine as both a carbon and a nitrogen source for growth. Probably catalyzes the conversion of L-2,4-diaminobutyrate (DABA) to L-aspartate beta-semialdehyde (ASA) by transamination with 2-oxoglutarate. The polypeptide is Diaminobutyrate--2-oxoglutarate transaminase (Halomonas elongata (strain ATCC 33173 / DSM 2581 / NBRC 15536 / NCIMB 2198 / 1H9)).